The sequence spans 108 residues: UPF0102 protein Sputcn32_3693 (108 aa).

Belongs to the UPF0102 family.

The chain is UPF0102 protein Sputcn32_3693 from Shewanella putrefaciens (strain CN-32 / ATCC BAA-453).